Reading from the N-terminus, the 234-residue chain is Fibronectin type III domain-containing protein 4 (234 aa).

The signal sequence occupies residues 1–44 (MPSGCHSSPPSGLRGDMASLVPLSPYLSPTVLLLVSCDLGFVRA). Topologically, residues 45–167 (DRPPSPVNVT…GLDGERPLQT (123 aa)) are extracellular. Residues 47-140 (PPSPVNVTVT…PRVHFRTLKG (94 aa)) form the Fibronectin type-III domain. Asn-52, Asn-97, and Asn-147 each carry an N-linked (GlcNAc...) asparagine glycan. The disordered stretch occupies residues 122 to 160 (GLRGESPPGPRVHFRTLKGSDRLPSNSSSPGDITVEGLD). A helical membrane pass occupies residues 168 to 188 (GEVVIIVVVLLMWAAVIGLFC). The Cytoplasmic portion of the chain corresponds to 189–234 (RQYDIIKDNDSNNNPKEKGKGPEQSPQGRPVGTRQKKSPSINTIDV). Residues 197–209 (NDSNNNPKEKGKG) are compositionally biased toward basic and acidic residues. Residues 197–234 (NDSNNNPKEKGKGPEQSPQGRPVGTRQKKSPSINTIDV) are disordered.

As to expression, highly expressed in the liver and the brain, including in the cortex, hypothalamus and hippocampus. Also expressed in adipose tissue.

It localises to the membrane. The protein resides in the secreted. In terms of biological role, has anti-inflammatory properties. In the colon, acts on macrophages to down-regulate inflammation. May suppress osteoclastogenesis and mature osteoclast resorptive function. In white adipose tissue, decreases local inflammation, via interaction with GPR116. Also required for proper systemic glucose tolerance, specifically sensitizing white adipocytes to insulin and promoting glucose uptake. The insulin sensitizing function in adipose tissue is mediated by interaction with ADGRF5/GPR116 and activation of cAMP signaling. The polypeptide is Fibronectin type III domain-containing protein 4 (FNDC4) (Homo sapiens (Human)).